A 324-amino-acid chain; its full sequence is S-methyl-5'-thioadenosine phosphorylase (324 aa).

Residues Ser-14, 57 to 58 (RH), and 90 to 91 (SA) contribute to the phosphate site. Met-196 serves as a coordination point for substrate. Ser-197 lines the phosphate pocket. Residue 220 to 222 (DYD) coordinates substrate.

The protein belongs to the PNP/MTAP phosphorylase family. MTAP subfamily. Homotrimer.

The protein localises to the cytoplasm. It localises to the nucleus. It carries out the reaction S-methyl-5'-thioadenosine + phosphate = 5-(methylsulfanyl)-alpha-D-ribose 1-phosphate + adenine. The protein operates within amino-acid biosynthesis; L-methionine biosynthesis via salvage pathway; S-methyl-5-thio-alpha-D-ribose 1-phosphate from S-methyl-5'-thioadenosine (phosphorylase route): step 1/1. Its function is as follows. Catalyzes the reversible phosphorylation of S-methyl-5'-thioadenosine (MTA) to adenine and 5-methylthioribose-1-phosphate. Involved in the breakdown of MTA, a major by-product of polyamine biosynthesis. Responsible for the first step in the methionine salvage pathway after MTA has been generated from S-adenosylmethionine. Has broad substrate specificity with 6-aminopurine nucleosides as preferred substrates. This chain is S-methyl-5'-thioadenosine phosphorylase, found in Coprinopsis cinerea (strain Okayama-7 / 130 / ATCC MYA-4618 / FGSC 9003) (Inky cap fungus).